The primary structure comprises 120 residues: Large ribosomal subunit protein uL22 (120 aa).

Belongs to the universal ribosomal protein uL22 family. Part of the 50S ribosomal subunit.

In terms of biological role, this protein binds specifically to 23S rRNA; its binding is stimulated by other ribosomal proteins, e.g. L4, L17, and L20. It is important during the early stages of 50S assembly. It makes multiple contacts with different domains of the 23S rRNA in the assembled 50S subunit and ribosome. Its function is as follows. The globular domain of the protein is located near the polypeptide exit tunnel on the outside of the subunit, while an extended beta-hairpin is found that lines the wall of the exit tunnel in the center of the 70S ribosome. The sequence is that of Large ribosomal subunit protein uL22 from Borreliella afzelii (strain PKo) (Borrelia afzelii).